The chain runs to 272 residues: Probable protein VP2 (272 aa).

Disordered stretches follow at residues 50-116 (GGSR…DFAD) and 195-272 (YSPA…SSSS). The span at 78–90 (APDPPAGNQPPAL) shows a compositional bias: pro residues. Over residues 94-108 (GDGGNESGAGGGESG) the composition is skewed to gly residues. Basic and acidic residues predominate over residues 218-230 (SKRDNKENRDRGR). The segment covering 231 to 246 (AKARAKQKPKKRRRRA) has biased composition (basic residues). Residues 249-272 (ESSSSSSSKSSFNSEEGSSASSSS) are compositionally biased toward low complexity.

Post-translationally, phosphorylated at C-terminal serines.

This Homo sapiens (Human) protein is Probable protein VP2.